Here is a 279-residue protein sequence, read N- to C-terminus: 2-dehydro-3-deoxyphosphooctonate aldolase (279 aa).

The protein belongs to the KdsA family.

It is found in the cytoplasm. It catalyses the reaction D-arabinose 5-phosphate + phosphoenolpyruvate + H2O = 3-deoxy-alpha-D-manno-2-octulosonate-8-phosphate + phosphate. Its pathway is carbohydrate biosynthesis; 3-deoxy-D-manno-octulosonate biosynthesis; 3-deoxy-D-manno-octulosonate from D-ribulose 5-phosphate: step 2/3. It participates in bacterial outer membrane biogenesis; lipopolysaccharide biosynthesis. The protein is 2-dehydro-3-deoxyphosphooctonate aldolase of Methylobacillus flagellatus (strain ATCC 51484 / DSM 6875 / VKM B-1610 / KT).